The primary structure comprises 331 residues: Aldo-keto reductase YhdN (331 aa).

Residues 20–21 and Asp-52 contribute to the NADP(+) site; that span reads TW. The active-site Proton donor is Tyr-57. Residues Gln-175, 203–208, Lys-214, Arg-227, 280–282, and Gln-286 each bind NADP(+); these read YGSLCR and GAR.

The protein belongs to the aldo/keto reductase family. Aldo/keto reductase 11 subfamily. As to quaternary structure, monomer.

Aldo-keto reductase (AKR) that displays broad substrate specificity in vitro. Is able to reduce the standard AKR substrates DL-glyceraldehyde, D-erythrose, methylglyoxal, p-nitrobenzaldehyde, benzaldehyde and butyraldehyde, in the presence of NADPH. Cannot use NADH as a cosubstrate. Does not act on glucose, 2-pyridine carboxyaldehyde, fructose and xylose. The physiological function of this enzyme is not clear. May play a role in bacterial stress response and/or in detoxification of reactive aldehydes. In Bacillus subtilis (strain 168), this protein is Aldo-keto reductase YhdN (yhdN).